The sequence spans 138 residues: Small ribosomal subunit protein uS11c (138 aa).

Belongs to the universal ribosomal protein uS11 family. Part of the 30S ribosomal subunit.

It localises to the plastid. It is found in the chloroplast. The sequence is that of Small ribosomal subunit protein uS11c from Illicium oligandrum (Star anise).